Reading from the N-terminus, the 379-residue chain is MSTNLRKTHPLVKIINNSFIDLPSPSNISAWWNFGSLLGACLILQTITGIFLAMHYSPDISLAFSSVAHITRDVQYGWLIRNMHANGASLFFMCIYLHIGRGLYYGSYLYKETWNTGITLLLLTMATAFVGYVLPWGQMSFWGATVITNLLSAVPYIGNTLVQWIWGGFSVDNATLTRFFTFHFLLPFTIMGMTMVHLLFLHETGSNNPTGLNSNTDKIPFHPYFSYKDLLGLILMLAFLLTLTLFYPNLLGDPDNFTPANPLSTPPHIKPEWYFLFAYAILRSIPNKLGGVLALLLSILVLFLMPTLHTSKQRTIQFRPLTQTLFWSFIANLMVLTWIGGQPVENPFITIGQVASILHFLILLILMPIAGVIENKMLT.

A run of 4 helical transmembrane segments spans residues 34 to 54, 78 to 99, 114 to 134, and 179 to 199; these read FGSLLGACLILQTITGIFLAM, WLIRNMHANGASLFFMCIYLHI, WNTGITLLLLTMATAFVGYVL, and FFTFHFLLPFTIMGMTMVHLL. Heme b contacts are provided by histidine 84 and histidine 98. Heme b is bound by residues histidine 183 and histidine 197. Histidine 202 is a binding site for a ubiquinone. 4 consecutive transmembrane segments (helical) span residues 227–247, 289–309, 321–341, and 348–368; these read YKDLLGLILMLAFLLTLTLFY, LGGVLALLLSILVLFLMPTLH, LTQTLFWSFIANLMVLTWIGG, and FITIGQVASILHFLILLILMP.

Belongs to the cytochrome b family. In terms of assembly, the cytochrome bc1 complex contains 3 respiratory subunits (MT-CYB, CYC1 and UQCRFS1), 2 core proteins (UQCRC1 and UQCRC2) and probably 6 low-molecular weight proteins. Heme b is required as a cofactor.

The protein localises to the mitochondrion inner membrane. In terms of biological role, component of the ubiquinol-cytochrome c reductase complex (complex III or cytochrome b-c1 complex) that is part of the mitochondrial respiratory chain. The b-c1 complex mediates electron transfer from ubiquinol to cytochrome c. Contributes to the generation of a proton gradient across the mitochondrial membrane that is then used for ATP synthesis. The polypeptide is Cytochrome b (MT-CYB) (Glyptemys muhlenbergii (Bog turtle)).